A 487-amino-acid chain; its full sequence is Steroid 21-hydroxylase (487 aa).

Heme b-binding residues include R92 and K117. R228 lines the 17alpha-hydroxyprogesterone pocket. R228 is a binding site for progesterone. The heme b site is built by H357, R418, and C420.

The protein belongs to the cytochrome P450 family. Heme b is required as a cofactor.

It localises to the endoplasmic reticulum membrane. The protein localises to the microsome membrane. It catalyses the reaction progesterone + reduced [NADPH--hemoprotein reductase] + O2 = 21-hydroxyprogesterone + oxidized [NADPH--hemoprotein reductase] + H2O + H(+). The enzyme catalyses 17alpha-hydroxyprogesterone + reduced [NADPH--hemoprotein reductase] + O2 = 11-deoxycortisol + oxidized [NADPH--hemoprotein reductase] + H2O + H(+). Functionally, a cytochrome P450 monooxygenase that plays a major role in adrenal steroidogenesis. Catalyzes the hydroxylation at C-21 of progesterone and 17alpha-hydroxyprogesterone to respectively form 11-deoxycorticosterone and 11-deoxycortisol, intermediate metabolites in the biosynthetic pathway of mineralocorticoids and glucocorticoids. Mechanistically, uses molecular oxygen inserting one oxygen atom into a substrate, and reducing the second into a water molecule, with two electrons provided by NADPH via cytochrome P450 reductase (CPR; NADPH-ferrihemoprotein reductase). This chain is Steroid 21-hydroxylase (Cyp21), found in Mus musculus (Mouse).